Consider the following 116-residue polypeptide: uncharacterized protein (116 aa).

A helical membrane pass occupies residues 52-72; the sequence is VFCSANSVPLYLLLLTSALHF.

The protein localises to the mitochondrion membrane. This is an uncharacterized protein from Arabidopsis thaliana (Mouse-ear cress).